The following is a 291-amino-acid chain: Acetyl-coenzyme A carboxylase carboxyl transferase subunit beta (291 aa).

A CoA carboxyltransferase N-terminal domain is found at 34–291 (MWTKCSNCNN…LILHGVNKYE (258 aa)). Residues Cys38, Cys41, Cys57, and Cys60 each contribute to the Zn(2+) site. Residues 38–60 (CSNCNNMIYYEDLENNKYVCTKC) form a C4-type zinc finger.

This sequence belongs to the AccD/PCCB family. Acetyl-CoA carboxylase is a heterohexamer composed of biotin carboxyl carrier protein (AccB), biotin carboxylase (AccC) and two subunits each of ACCase subunit alpha (AccA) and ACCase subunit beta (AccD). It depends on Zn(2+) as a cofactor.

It localises to the cytoplasm. It carries out the reaction N(6)-carboxybiotinyl-L-lysyl-[protein] + acetyl-CoA = N(6)-biotinyl-L-lysyl-[protein] + malonyl-CoA. The protein operates within lipid metabolism; malonyl-CoA biosynthesis; malonyl-CoA from acetyl-CoA: step 1/1. Component of the acetyl coenzyme A carboxylase (ACC) complex. Biotin carboxylase (BC) catalyzes the carboxylation of biotin on its carrier protein (BCCP) and then the CO(2) group is transferred by the transcarboxylase to acetyl-CoA to form malonyl-CoA. This Clostridium botulinum (strain Eklund 17B / Type B) protein is Acetyl-coenzyme A carboxylase carboxyl transferase subunit beta.